Here is a 575-residue protein sequence, read N- to C-terminus: MWSLLLCGLSIALPLSVTADGCKDIFMKNEILSASQPFAFNCTFPPITSGEVSVTWYKNSSKIPVSKIIQSRIHQDETWILFLPMEWGDSGVYQCVIKGRDSCHRIHVNLTVFEKHWCDTSIGGLPNLSDEYKQILHLGKDDSLTCHLHFPKSCVLGPIKWYKDCNEIKGERFTVLETRLLVSNVSAEDRGNYACQAILTHSGKQYEVLNGITVSITERAGYGGSVPKIIYPKNHSIEVQLGTTLIVDCNVTDTKDNTNLRCWRVNNTLVDDYYDESKRIREGVETHVSFREHNLYTVNITFLEVKMEDYGLPFMCHAGVSTAYIILQLPAPDFRAYLIGGLIALVAVAVSVVYIYNIFKIDIVLWYRSAFHSTETIVDGKLYDAYVLYPKPHKESQRHAVDALVLNILPEVLERQCGYKLFIFGRDEFPGQAVANVIDENVKLCRRLIVIVVPESLGFGLLKNLSEEQIAVYSALIQDGMKVILIELEKIEDYTVMPESIQYIKQKHGAIRWHGDFTEQSQCMKTKFWKTVRYHMPPRRCRPFPPVQLLQHTPCYRTAGPELGSRRKKCTLTTG.

Positions 1 to 19 (MWSLLLCGLSIALPLSVTA) are cleaved as a signal peptide. 3 Ig-like C2-type domains span residues 20 to 111 (DGCK…VNLT), 126 to 211 (PNLS…VLNG), and 222 to 318 (YGGS…MCHA). At 20–335 (DGCKDIFMKN…ILQLPAPDFR (316 aa)) the chain is on the extracellular side. N-linked (GlcNAc...) asparagine glycosylation is found at asparagine 41, asparagine 59, asparagine 109, asparagine 127, asparagine 184, asparagine 234, asparagine 250, asparagine 266, and asparagine 299. Cysteine 42 and cysteine 95 are joined by a disulfide. Cysteines 146 and 195 form a disulfide. An intrachain disulfide couples cysteine 249 to cysteine 316. The chain crosses the membrane as a helical span at residues 336-356 (AYLIGGLIALVAVAVSVVYIY). Over 357 to 575 (NIFKIDIVLW…RRKKCTLTTG (219 aa)) the chain is Cytoplasmic. The TIR domain maps to 381–536 (KLYDAYVLYP…KFWKTVRYHM (156 aa)). Residue glutamate 467 is part of the active site.

The protein belongs to the interleukin-1 receptor family. As to quaternary structure, interacts with IL1RAP; the association is enhanced by IL36B indicative for an functional signaling complex and inhibited by IL36RN. In terms of tissue distribution, expressed in synovial fibroblasts and articular chondrocytes. Expressed in keratinocytes and monocyte-derived dendritic cells. Expressed in monocytes and myeloid dendritic cells; at protein level.

It localises to the membrane. The catalysed reaction is NAD(+) + H2O = ADP-D-ribose + nicotinamide + H(+). Receptor for interleukin-36 (IL36A, IL36B and IL36G). After binding to interleukin-36 associates with the coreceptor IL1RAP to form the interleukin-36 receptor complex which mediates interleukin-36-dependent activation of NF-kappa-B, MAPK and other pathways. The IL-36 signaling system is thought to be present in epithelial barriers and to take part in local inflammatory response; it is similar to the IL-1 system. Seems to be involved in skin inflammatory response by induction of the IL-23/IL-17/IL-22 pathway. The sequence is that of Interleukin-1 receptor-like 2 (IL1RL2) from Homo sapiens (Human).